The primary structure comprises 358 residues: uncharacterized protein (358 aa).

A signal peptide spans methionine 1–alanine 15. The N-palmitoyl cysteine moiety is linked to residue cysteine 16. Cysteine 16 carries S-diacylglycerol cysteine lipidation. The interval proline 331–arginine 358 is disordered. The span at valine 347 to arginine 358 shows a compositional bias: polar residues.

The protein localises to the cell membrane. This is an uncharacterized protein from Sinorhizobium fredii (strain NBRC 101917 / NGR234).